Here is a 308-residue protein sequence, read N- to C-terminus: Putative proline iminopeptidase (308 aa).

Residues 30–290 enclose the AB hydrolase-1 domain; it reads KPVLYIHGGP…LYVTNNAGHS (261 aa). Serine 105 (nucleophile) is an active-site residue. The active site involves aspartate 261. Histidine 289 serves as the catalytic Proton donor.

Belongs to the peptidase S33 family.

The protein resides in the cytoplasm. It catalyses the reaction Release of N-terminal proline from a peptide.. In terms of biological role, specifically catalyzes the removal of N-terminal proline residues from peptides. The polypeptide is Putative proline iminopeptidase (pip) (Mycoplasma genitalium (strain ATCC 33530 / DSM 19775 / NCTC 10195 / G37) (Mycoplasmoides genitalium)).